The following is a 306-amino-acid chain: Protoheme IX farnesyltransferase (306 aa).

A run of 8 helical transmembrane segments spans residues 31-50 (VIELLLVTTAPVMILAQGGW), 55-77 (LILGVLVGGTLSAGSANAFNCYI), 104-124 (LVFAWIIGVASIVWLGVISNW), 125-145 (LAAALSLAAILFYVFVYTLWL), 168-188 (WAAVTGDISWAPVILFMIVFL), 218-235 (GRAAVGLQTILYAWATLA), 238-258 (LLLIPVAGMGLVYTLAALAGG), and 286-306 (ASISYLSLLFLAVGIDPLLPF).

The protein belongs to the UbiA prenyltransferase family. Protoheme IX farnesyltransferase subfamily.

It is found in the cell membrane. The enzyme catalyses heme b + (2E,6E)-farnesyl diphosphate + H2O = Fe(II)-heme o + diphosphate. The protein operates within porphyrin-containing compound metabolism; heme O biosynthesis; heme O from protoheme: step 1/1. Functionally, converts heme B (protoheme IX) to heme O by substitution of the vinyl group on carbon 2 of heme B porphyrin ring with a hydroxyethyl farnesyl side group. The polypeptide is Protoheme IX farnesyltransferase (Clavibacter michiganensis subsp. michiganensis (strain NCPPB 382)).